The following is a 425-amino-acid chain: Serine--tRNA ligase (425 aa).

233 to 235 (TAE) contributes to the L-serine binding site. Residues 264-266 (RRE) and valine 280 contribute to the ATP site. Glutamate 287 is an L-serine binding site. Residue 351 to 354 (EVSS) coordinates ATP. Serine 387 contributes to the L-serine binding site.

The protein belongs to the class-II aminoacyl-tRNA synthetase family. Type-1 seryl-tRNA synthetase subfamily. As to quaternary structure, homodimer. The tRNA molecule binds across the dimer.

It is found in the cytoplasm. The catalysed reaction is tRNA(Ser) + L-serine + ATP = L-seryl-tRNA(Ser) + AMP + diphosphate + H(+). It catalyses the reaction tRNA(Sec) + L-serine + ATP = L-seryl-tRNA(Sec) + AMP + diphosphate + H(+). The protein operates within aminoacyl-tRNA biosynthesis; selenocysteinyl-tRNA(Sec) biosynthesis; L-seryl-tRNA(Sec) from L-serine and tRNA(Sec): step 1/1. Catalyzes the attachment of serine to tRNA(Ser). Is also able to aminoacylate tRNA(Sec) with serine, to form the misacylated tRNA L-seryl-tRNA(Sec), which will be further converted into selenocysteinyl-tRNA(Sec). The chain is Serine--tRNA ligase from Gemmatimonas aurantiaca (strain DSM 14586 / JCM 11422 / NBRC 100505 / T-27).